Consider the following 793-residue polypeptide: Wall-associated receptor kinase-like 18 (793 aa).

Residues 1–28 form the signal peptide; that stretch reads MSNESTNCSFFLNLFMLLLLLIFYSADA. Topologically, residues 29–378 are extracellular; that stretch reads CQRECGGISI…YRCVRDKTKA (350 aa). N-linked (GlcNAc...) asparagine glycosylation is found at asparagine 60, asparagine 130, asparagine 170, asparagine 238, asparagine 285, and asparagine 304. The segment at 312 to 371 is atypical EGF-like; that stretch reads CTCGRITISETSYANCGCTYGYTGNPYVLNGCKDIDECKVKFEYCGKTETCVNFEGGYRC. Cystine bridges form between cysteine 314/cysteine 327, cysteine 349/cysteine 362, and cysteine 356/cysteine 371. The helical transmembrane segment at 379–399 threads the bilayer; that stretch reads IMIGAGTGFGVLVLVGGLWWL. Residues 400 to 793 lie on the Cytoplasmic side of the membrane; sequence RKFLIKRRIT…VEPLFPRLTW (394 aa). One can recognise a Protein kinase domain in the interval 453–728; sequence FSENRVLGHG…REVFTELERI (276 aa). Residues 459 to 467 and lysine 481 each bind ATP; that span reads LGHGGQGTV. Tyrosine 526 bears the Phosphotyrosine mark. Residue aspartate 579 is the Proton acceptor of the active site. Threonine 613 and threonine 618 each carry phosphothreonine. Phosphotyrosine is present on tyrosine 626. The segment at 733-757 is disordered; sequence EDSQVHNRIDEEEEEEEEEEEVVTT. Acidic residues predominate over residues 742–754; it reads DEEEEEEEEEEEV.

Belongs to the protein kinase superfamily. Ser/Thr protein kinase family.

The protein localises to the membrane. It catalyses the reaction L-seryl-[protein] + ATP = O-phospho-L-seryl-[protein] + ADP + H(+). It carries out the reaction L-threonyl-[protein] + ATP = O-phospho-L-threonyl-[protein] + ADP + H(+). Functionally, serine/threonine-protein kinase that may function as a signaling receptor of extracellular matrix component. This Arabidopsis thaliana (Mouse-ear cress) protein is Wall-associated receptor kinase-like 18 (WAKL18).